A 324-amino-acid polypeptide reads, in one-letter code: Olfactory receptor 8U3 (324 aa).

Over Met1–Ala25 the chain is Extracellular. The chain crosses the membrane as a helical span at residues Pro26–Ile46. The Cytoplasmic segment spans residues Thr47–Arg54. A helical membrane pass occupies residues Leu55–Ser75. The Extracellular segment spans residues Ala76 to Thr99. Cys97 and Cys189 form a disulfide bridge. Residues Gln100–Tyr120 form a helical membrane-spanning segment. The Cytoplasmic portion of the chain corresponds to Asp121–Arg139. Residues Val140–Thr160 traverse the membrane as a helical segment. Residues Val161–Glu196 lie on the Extracellular side of the membrane. A helical membrane pass occupies residues Ile197–Ser217. The Cytoplasmic portion of the chain corresponds to Tyr218–Ala237. The chain crosses the membrane as a helical span at residues Ile238 to Met258. Topologically, residues Tyr259–Asp271 are extracellular. Residue Asn265 is glycosylated (N-linked (GlcNAc...) asparagine). A helical membrane pass occupies residues Lys272 to Leu292. The Cytoplasmic segment spans residues Arg293–Tyr324.

Belongs to the G-protein coupled receptor 1 family.

Its subcellular location is the cell membrane. Its function is as follows. Odorant receptor. The protein is Olfactory receptor 8U3 of Homo sapiens (Human).